A 317-amino-acid polypeptide reads, in one-letter code: Ferrochelatase (317 aa).

Residues His187 and Glu268 each coordinate Fe cation.

This sequence belongs to the ferrochelatase family.

It localises to the cytoplasm. The catalysed reaction is heme b + 2 H(+) = protoporphyrin IX + Fe(2+). It participates in porphyrin-containing compound metabolism; protoheme biosynthesis; protoheme from protoporphyrin-IX: step 1/1. In terms of biological role, catalyzes the ferrous insertion into protoporphyrin IX. The chain is Ferrochelatase from Campylobacter concisus (strain 13826).